We begin with the raw amino-acid sequence, 940 residues long: Serine/threonine-protein phosphatase 1 regulatory subunit 10 (940 aa).

An interaction with TOX4 region spans residues 1-348; sequence MGSGPIDPKE…EPAPPSEAMD (348 aa). One can recognise a TFIIS N-terminal domain in the interval 73–147; sequence KLLNNWLTYS…SDWMAVIRSQ (75 aa). Disordered stretches follow at residues 147-211, 247-270, 304-400, and 533-905; these read QSST…FRST, SNVA…NTTP, KIKK…KSVT, and YVET…HGGD. Composition is skewed to basic and acidic residues over residues 153–166 and 174–196; these read AEKD…EGKS and PLTE…EKPK. Lys179 is covalently cross-linked (Glycyl lysine isopeptide (Lys-Gly) (interchain with G-Cter in SUMO2)). The residue at position 256 (Thr256) is a Phosphothreonine. Lys262 participates in a covalent cross-link: Glycyl lysine isopeptide (Lys-Gly) (interchain with G-Cter in SUMO2). Ser313 bears the Phosphoserine mark. The span at 325-336 shows a compositional bias: low complexity; that stretch reads KTSTEPSTAKPS. A necessary for interaction with PPP1CA region spans residues 357–433; that stretch reads PPVEVPELMD…NKIKDFGEAA (77 aa). Position 382 is a phosphoserine (Ser382). The segment at 393–408 is necessary for interaction with PPP1CC; the sequence is GRKRKSVTWPEEGKLR. Residues 394 to 423 carry the PP1-binding motif motif; it reads RKRKSVTWPEEGKLREYFYFELDETERVNV. Residue Ser398 is modified to Phosphoserine; by PKA. The segment at 418–619 is interaction with WDR82; it reads TERVNVNKIK…IKQMLVPHGL (202 aa). Gly residues-rich tracts occupy residues 540–551 and 565–579; these read GGSGGSPDGAGG and MGAG…GGGI. Residue Ser545 is modified to Phosphoserine. Over residues 583 to 595 the composition is skewed to polar residues; that stretch reads EILTSIMGSPNSH. At Ser591 the chain carries Phosphoserine. Positions 596 to 611 are enriched in basic and acidic residues; that stretch reads PSEELLKQPDYSDKIK. Residues 644–655 are compositionally biased toward pro residues; that stretch reads PPGPGGPMPGPH. Arg665 is modified (omega-N-methylarginine). Over residues 676–690 the composition is skewed to low complexity; that stretch reads GDPFWDGPGDPMRGG. Arg693 is modified (omega-N-methylarginine). Positions 714 to 723 are enriched in pro residues; the sequence is EPPPPPPPPF. 2 stretches are compositionally biased toward gly residues: residues 726-764 and 790-845; these read ARGG…GMGN and SSMG…GSGG. At Arg739 the chain carries Omega-N-methylarginine. Basic and acidic residues-rich tracts occupy residues 862 to 886 and 894 to 903; these read PHDV…HDGP and RGHDGGHSHG. The C3H1-type zinc-finger motif lies at 906-934; that stretch reads MSNRPVCRHFMMKGNCRYENNCAFYHPGV.

Component of the PNUTS-PP1 complex (also named PTW/PP1 complex), composed of PPP1R10/PNUTS, TOX4, WDR82, and PPP1CA (or PPP1CB or PPP1CC). Post-translationally, phosphorylated on Ser-398 by PKA within the region necessary for interaction with PPP1CA.

It is found in the nucleus. The protein localises to the chromosome. Functionally, substrate-recognition component of the PNUTS-PP1 protein phosphatase complex, a protein phosphatase 1 (PP1) complex that promotes RNA polymerase II transcription pause-release, allowing transcription elongation. Promoter-proximal pausing by RNA polymerase II is a transcription halt following transcription initiation but prior to elongation, which acts as a checkpoint to control that transcripts are favorably configured for transcriptional elongation. The PNUTS-PP1 complex mediates the release of RNA polymerase II from promoter-proximal region of genes by catalyzing dephosphorylation of proteins involved in transcription, such as AFF4, CDK9, MEPCE, INTS12, NCBP1, POLR2M/GDOWN1 and SUPT6H. The PNUTS-PP1 complex also regulates RNA polymerase II transcription termination by mediating dephosphorylation of SUPT5H in termination zones downstream of poly(A) sites, thereby promoting deceleration of RNA polymerase II transcription. PNUTS-PP1 complex is also involved in the response to replication stress by mediating dephosphorylation of POLR2A at 'Ser-5' of the CTD, promoting RNA polymerase II degradation. The PNUTS-PP1 complex also plays a role in the control of chromatin structure and cell cycle progression during the transition from mitosis into interphase. PNUTS-PP1 complex mediates dephosphorylation of MYC, promoting MYC stability by preventing MYC ubiquitination by the SCF(FBXW7) complex. In addition to acts as a substrate-recognition component, PPP1R10/PNUTS also acts as a nuclear targeting subunit for the PNUTS-PP1 complex. In some context, PPP1R10/PNUTS also acts as an inhibitor of protein phosphatase 1 (PP1) activity by preventing access to substrates, such as RB. The polypeptide is Serine/threonine-protein phosphatase 1 regulatory subunit 10 (PPP1R10) (Macaca mulatta (Rhesus macaque)).